Consider the following 471-residue polypeptide: Glutamyl-tRNA(Gln) amidotransferase subunit A (471 aa).

Active-site charge relay system residues include lysine 66 and serine 141. The active-site Acyl-ester intermediate is serine 165.

It belongs to the amidase family. GatA subfamily. In terms of assembly, heterotrimer of A, B and C subunits.

The enzyme catalyses L-glutamyl-tRNA(Gln) + L-glutamine + ATP + H2O = L-glutaminyl-tRNA(Gln) + L-glutamate + ADP + phosphate + H(+). Its function is as follows. Allows the formation of correctly charged Gln-tRNA(Gln) through the transamidation of misacylated Glu-tRNA(Gln) in organisms which lack glutaminyl-tRNA synthetase. The reaction takes place in the presence of glutamine and ATP through an activated gamma-phospho-Glu-tRNA(Gln). The sequence is that of Glutamyl-tRNA(Gln) amidotransferase subunit A from Thermus thermophilus (strain ATCC BAA-163 / DSM 7039 / HB27).